The chain runs to 567 residues: Zinc finger protein 512 (567 aa).

Residues 1 to 32 (MSSRLGAVPATSGPTTFKQQRSTRIVGAKNSR) are disordered. Over residues 12–23 (SGPTTFKQQRST) the composition is skewed to polar residues. Residues Lys-18 and Lys-84 each participate in a glycyl lysine isopeptide (Lys-Gly) (interchain with G-Cter in SUMO2) cross-link. The interval 86–148 (AATSHVEGSG…QARRIRKEPP (63 aa)) is disordered. Residues 119-130 (KKHKLYGRKQRP) show a composition bias toward basic residues. A C2H2-type 1 zinc finger spans residues 197–220 (FTCHHCGKQLRSLAGMKYHVMANH). Residue Lys-227 forms a Glycyl lysine isopeptide (Lys-Gly) (interchain with G-Cter in SUMO2) linkage. A C2H2-type 2 zinc finger spans residues 287-310 (LKCHHCGKPYRSKAGLAYHLRSEH). Lys-333 participates in a covalent cross-link: Glycyl lysine isopeptide (Lys-Gly) (interchain with G-Cter in SUMO2). The segment at 406–430 (IQCPNQGCEAVYSSVSGLKAHLGSC) adopts a C2H2-type 3; atypical zinc-finger fold. The C2H2-type 4 zinc finger occupies 440-463 (YKCLLCQKEFVSESGVKYHINSVH). Residues 486–567 (QRQQEEEKRR…PKTNHKRGRK (82 aa)) are disordered. Positions 495-508 (RQQHRSRRSLRRRQ) are enriched in basic residues. The span at 523-532 (VGKDQRRNNE) shows a compositional bias: basic and acidic residues. Basic residues predominate over residues 556 to 567 (KPPKTNHKRGRK).

It belongs to the krueppel C2H2-type zinc-finger protein family.

The protein localises to the nucleus. In terms of biological role, may be involved in transcriptional regulation. The chain is Zinc finger protein 512 (ZNF512) from Pongo abelii (Sumatran orangutan).